Consider the following 427-residue polypeptide: Histidinol dehydrogenase (427 aa).

NAD(+) contacts are provided by Tyr127, Gln185, and Asn208. Substrate-binding residues include Ser232, Gln254, and His257. Zn(2+) is bound by residues Gln254 and His257. Residues Glu321 and His322 each act as proton acceptor in the active site. Substrate contacts are provided by His322, Asp355, Glu409, and His414. Asp355 provides a ligand contact to Zn(2+). His414 serves as a coordination point for Zn(2+).

Belongs to the histidinol dehydrogenase family. It depends on Zn(2+) as a cofactor.

The catalysed reaction is L-histidinol + 2 NAD(+) + H2O = L-histidine + 2 NADH + 3 H(+). It participates in amino-acid biosynthesis; L-histidine biosynthesis; L-histidine from 5-phospho-alpha-D-ribose 1-diphosphate: step 9/9. Catalyzes the sequential NAD-dependent oxidations of L-histidinol to L-histidinaldehyde and then to L-histidine. The chain is Histidinol dehydrogenase from Haemophilus influenzae (strain 86-028NP).